Here is a 574-residue protein sequence, read N- to C-terminus: Kelch-like protein 18 (574 aa).

One can recognise a BTB domain in the interval 66–105 (MFTNDMMECKQDEIVMQGMDPSALEALINFAYNGNLAIDQ). One can recognise a BACK domain in the interval 140–242 (CLGVRQFAET…RPQFLSDRVQ (103 aa)). 6 Kelch repeats span residues 289–336 (LIYA…VVNG), 337–383 (LLYA…VLDG), 384–430 (QIYV…VFEG), 432–477 (IYVS…SLGS), 479–524 (MFVC…ASCG), and 525–571 (RLYA…CIPL).

As to quaternary structure, interacts with AURKA. Interacts (via BTB domain) with CUL3. Interacts (via kelch repeats) with UNC119.

The protein operates within protein modification; protein ubiquitination. Substrate-specific adapter of a BCR (BTB-CUL3-RBX1) E3 ubiquitin-protein ligase complex required for mitotic progression and cytokinesis. The BCR(KLHL18) E3 ubiquitin ligase complex mediates the ubiquitination of AURKA leading to its activation at the centrosome which is required for initiating mitotic entry. Regulates light-and dark-dependent alpha-transducin localization changes in rod photoreceptors through UNC119 ubiquitination and degradation. Preferentially ubiquitinates the unphosphorylated form of UNC119 over the phosphorylated form. In the presence of UNC119, under dark-adapted conditions alpha-transducin mislocalizes from the outer segment to the inner part of rod photoreceptors which leads to decreased photoreceptor damage caused by light. In Homo sapiens (Human), this protein is Kelch-like protein 18 (KLHL18).